The following is a 520-amino-acid chain: MTDISILNDIQKIIVLDYGSQYNQLIARRIREFGVFSELKSHKITADEIRDINPIGIVLSGGPNSVYADGAFGIDEEIFELGIPILGICYGMQLITHKLGGKVLPAGEAGHREYGQSALRLRSESALFAGTPQEQLVLMSHGDAVTEIPEGFHLVGDSVDCPFAAMENTEKQFYGIQFHPEVRHSVYGNDILKNFAVNICGARGDWSMDNFIDMEIAKIRETVGDRKVLLGLSGGVDSSVVGVLLQRAIGDQLTCIFVDHGLLRKNEGDQVMDMLGGKFGLNIIRVDASKRFLDLLSGVEDPERKRKIIGNEFVYVFDDEASKLKGVDFLAQGTLYTDIIESGTETAQTIKSHHNVGGLPEDMQFELIEPLNTLFKDEVRALGTALGMPDEVVWRQPFPGPGLAIRVMGEITEEKLETVRESDAILREEIAKAGLDRDVWQYFTVNTGVRSVGVMGDGRTYDYTIAIRAITSIDGMTADFAQLPWDVLKKISTRIVNEVDHVNRIVYDITSKPPATVEWE.

In terms of domain architecture, Glutamine amidotransferase type-1 spans 12–205 (KIIVLDYGSQ…AVNICGARGD (194 aa)). Catalysis depends on C89, which acts as the Nucleophile. Active-site residues include H179 and E181. Residues 206 to 395 (WSMDNFIDME…LGMPDEVVWR (190 aa)) enclose the GMPS ATP-PPase domain. ATP is bound at residue 233–239 (SGGVDSS).

In terms of assembly, homodimer.

It carries out the reaction XMP + L-glutamine + ATP + H2O = GMP + L-glutamate + AMP + diphosphate + 2 H(+). It functions in the pathway purine metabolism; GMP biosynthesis; GMP from XMP (L-Gln route): step 1/1. Catalyzes the synthesis of GMP from XMP. The polypeptide is GMP synthase [glutamine-hydrolyzing] (Streptococcus agalactiae serotype III (strain NEM316)).